A 205-amino-acid polypeptide reads, in one-letter code: Gap junction epsilon-1 protein (205 aa).

Residues 1–22 lie on the Cytoplasmic side of the membrane; the sequence is MSLNYIKNFYEGCVKPPTVIGQ. A helical transmembrane segment spans residues 23–43; that stretch reads FHTLFFGSVRMFFLGVLGFAV. At 44–74 the chain is on the extracellular side; sequence YGNEALHFSCDPDKREINLFCYNQFRPITPQ. Disulfide bonds link C53–C161 and C64–C147. Residues 75-95 form a helical membrane-spanning segment; sequence VFWALQLVIVLLPGAIFHLYA. At 96-111 the chain is on the cytoplasmic side; it reads ACKSINQDCILQKPVY. The chain crosses the membrane as a helical span at residues 112–132; sequence TVIYVLSVLLRISLEVFAFWL. Residues 133–170 are Extracellular-facing; it reads QIHLFGFQVKPIYLCDTESLGKKPNILKCMVPEHFEKT. A helical transmembrane segment spans residues 171–191; that stretch reads IFLIAMYTFTVITMVLCVAEV. Residues 192 to 205 lie on the Cytoplasmic side of the membrane; that stretch reads FEIIFRRSCFLFKR.

The protein belongs to the connexin family. Beta-type (group I) subfamily. A connexon is composed of a hexamer of connexins. Highly expressed in lens, where it is mainly found in lens fibers and to a lesser extent in lens epithelium. Weakly expressed in retina. Not detected in other tissues tested.

Its subcellular location is the cell membrane. Functionally, mediates calcium-independent ATP release, suggesting activity as a hemichannel. Does not form functional gap junctions. May play a non-essential role in eye lens development. In Mus musculus (Mouse), this protein is Gap junction epsilon-1 protein.